The following is a 162-amino-acid chain: Putative ethylene-responsive transcription factor ERF121 (162 aa).

Disordered regions lie at residues 1 to 21, 84 to 103, and 139 to 162; these read MDYS…PPNL, IKQE…KWSA, and KRSA…GGDD. Residues 87–98 are compositionally biased toward basic residues; the sequence is EKKHKGVRKKPS. Residues 89–146 constitute a DNA-binding region (AP2/ERF); that stretch reads KHKGVRKKPSGKWSAEIWDPSTRTRRWLGTFPTAEMAADAYDEAAAALVEKRSARRGS.

The protein belongs to the AP2/ERF transcription factor family. ERF subfamily.

Its subcellular location is the nucleus. In terms of biological role, probably acts as a transcriptional activator. Binds to the GCC-box pathogenesis-related promoter element. May be involved in the regulation of gene expression by stress factors and by components of stress signal transduction pathways. The chain is Putative ethylene-responsive transcription factor ERF121 (ERF121) from Arabidopsis thaliana (Mouse-ear cress).